The sequence spans 299 residues: Peroxisomal biogenesis factor 19 (299 aa).

The tract at residues 1–63 (MAAAEEGCDA…SPGDTAKDAL (63 aa)) is disordered. Ala2 carries the N-acetylalanine modification. The tract at residues 2 to 56 (AAAEEGCDAGVEADRELEELLESALDDFDKAKPSPAPPPTTSAPDASGPQKKSPG) is docking to the peroxisome membrane and binding to PEX3. Residues 2–91 (AAAEEGCDAG…QATAEFEKAM (90 aa)) are necessary for PEX19 function on peroxisome biogenesis. Acidic residues predominate over residues 16–27 (RELEELLESALD). Phosphoserine is present on residues Ser35, Ser54, and Ser66. Phosphothreonine is present on Thr236. A Cysteine methyl ester modification is found at Cys296. Cys296 is lipidated: S-farnesyl cysteine. A propeptide spans 297 to 299 (LIM) (removed in mature form).

Belongs to the peroxin-19 family. As to quaternary structure, interacts with a broad range of peroxisomal membrane proteins, including PEX3, PEX10, PEX11A, PEX11B, PEX12, PEX13, PEX14 and PEX16, PXMP2/PMP22, PXMP4/PMP24, SLC25A17/PMP34, ABCD1/ALDP, ABCD2/ALDRP, and ABCD3/PMP70. Also interacts with the tumor suppressor CDKN2A/p19ARF. In terms of tissue distribution, ubiquitous.

Its subcellular location is the cytoplasm. The protein resides in the peroxisome membrane. Its function is as follows. Necessary for early peroxisomal biogenesis. Acts both as a cytosolic chaperone and as an import receptor for peroxisomal membrane proteins (PMPs). Binds and stabilizes newly synthesized PMPs in the cytoplasm by interacting with their hydrophobic membrane-spanning domains, and targets them to the peroxisome membrane by binding to the integral membrane protein PEX3. Excludes CDKN2A from the nucleus and prevents its interaction with MDM2, which results in active degradation of TP53. This Cricetulus griseus (Chinese hamster) protein is Peroxisomal biogenesis factor 19 (PEX19).